The following is a 1171-amino-acid chain: WD repeat-containing protein on Y chromosome (1171 aa).

WD repeat units follow at residues 157-201, 331-370, 374-413, 464-503, 516-555, 603-643, 748-787, and 831-870; these read EIPE…LRSA, RIPLGVSVFYVAESKNILVTGGPDTFVRIWDVYISSEPSA, GHNGGIVAVFVQPEENKVYSVDYHKVIKVWDLQEHTLLQT, THAAPVSVVLYNRLFRNIVTCGLDSYIIVWDPWTGRRKII, IIDIEITAACFDPLEQFLLTGARDGSLKIWNYNNAVVVRN, FHTD…RRYN, KVGDCVLTMASDRKNRFLYTGTAFGYIKIWHIVNYCIPQA, and GHLKAINSIGFINLPKILFTGSHDYSCRLWTQGGRYLGTL. Residues 1076–1171 form a disordered region; it reads RTSFTLSDYT…TNTMKSSNSH (96 aa). Composition is skewed to polar residues over residues 1094 to 1106 and 1161 to 1171; these read SSRNMKSNLSSGS and KTNTMKSSNSH.

The chain is WD repeat-containing protein on Y chromosome from Drosophila grimshawi (Hawaiian fruit fly).